We begin with the raw amino-acid sequence, 375 residues long: MKRDYYEVLGVGKGADADEIKKAYRKLARQYHPDVNKAADAEEKFKEVKEAYDVLSEPQKRAQYDRFGHQDPNQGFGGGGFDASGMGGFGDIFDMFFGGGGRRANPNAPRKGSDLQFGLSIEFTETVFGKETDVEIPKEAECDTCHGSGAKPGTGVETCKTCSGTGQQEVAANTPFGRIVNRRVCTTCEGKGKVFKEKCSSCRGSGRVKVRRKIHLNIPAGVDDGAQLRVTGEGEPGVNGGPPGDLYVVLRVKSHEFFEREGNDIYCEVPLTYAQAALGDEIEVPTVDGRVKLKIPSGTQTETFFRLRGKGVPHLRGNGRGDQHVKVRVITPTKLSDKQKELLRELAELSGEKPGQHGGEDEGFFEKMKRAFRGE.

Positions 4-68 (DYYEVLGVGK…QKRAQYDRFG (65 aa)) constitute a J domain. The CR-type zinc finger occupies 129 to 211 (GKETDVEIPK…CRGSGRVKVR (83 aa)). Zn(2+)-binding residues include cysteine 142, cysteine 145, cysteine 159, cysteine 162, cysteine 185, cysteine 188, cysteine 199, and cysteine 202. CXXCXGXG motif repeat units follow at residues 142–149 (CDTCHGSG), 159–166 (CKTCSGTG), 185–192 (CTTCEGKG), and 199–206 (CSSCRGSG). The segment at 349 to 375 (LSGEKPGQHGGEDEGFFEKMKRAFRGE) is disordered.

It belongs to the DnaJ family. In terms of assembly, homodimer. The cofactor is Zn(2+).

Its subcellular location is the cytoplasm. Functionally, participates actively in the response to hyperosmotic and heat shock by preventing the aggregation of stress-denatured proteins and by disaggregating proteins, also in an autonomous, DnaK-independent fashion. Unfolded proteins bind initially to DnaJ; upon interaction with the DnaJ-bound protein, DnaK hydrolyzes its bound ATP, resulting in the formation of a stable complex. GrpE releases ADP from DnaK; ATP binding to DnaK triggers the release of the substrate protein, thus completing the reaction cycle. Several rounds of ATP-dependent interactions between DnaJ, DnaK and GrpE are required for fully efficient folding. Also involved, together with DnaK and GrpE, in the DNA replication of plasmids through activation of initiation proteins. The protein is Chaperone protein DnaJ of Brevibacillus choshinensis.